A 100-amino-acid chain; its full sequence is Small ribosomal subunit protein uS14c (100 aa).

The protein belongs to the universal ribosomal protein uS14 family. As to quaternary structure, part of the 30S ribosomal subunit.

Its subcellular location is the plastid. The protein localises to the chloroplast. Binds 16S rRNA, required for the assembly of 30S particles. The sequence is that of Small ribosomal subunit protein uS14c from Fagopyrum esculentum subsp. ancestrale (Wild buckwheat).